A 652-amino-acid chain; its full sequence is MSNFSSRKKSPTGNDLKSARGAELRQQGFQDVNKRRAFLQDNSWIKKPPEEEQDGNYGRVVLNRHNSHDALDRKLIERDEPKATISRYRSEDMLDRTLSSFRTPQSTKTPAVSSFNANTTATASTPATTPVKKKRQSWFPPPPPGHNASPSTAASRRDPALHPPLPPKPCSPIASPKPLGRTNRQIHAATAGACGETERHAERNIRTEDLDDIIRVAAALQKTDKGEELDNLIRMNKSLNRNQGLDGLFRANLKAQQLDKRAQSLESLIYMNTQTDRDGKGNQAFGSLKKINQRADPDRRSQDLRSVIRTHATAERIGRRKQDLDGLIKVNPDTNKNMKRGKSLDNLIKVTPEVNRSNKGGPSLDNFTKGVPARSRANQRDQDLDSLIKVTPSANRSSQHSLDELINTSPQTIKTTARHQDLDKFIKVNPDVLTNNQRNHDVDSTIRGNPTGTRCEQSEELDNLIKVKPSALRNTNGGQDLESLTEVNSHVAEKNGRIDGQANGLTNSLFKESTRASVYSYEARNSLSSNSGNKNGGPKDTVVYTRTYVENSKSPKDGYQENISGKYIQTVYSTSDRSVIERDMCTYCRKPLGVETKMILDELQICCHSTCFKCEICKRPLENLQAGDSIWIYRQTIHCEPCYSKVMAKWIQ.

Over residues 1-10 the composition is skewed to basic residues; it reads MSNFSSRKKS. Disordered stretches follow at residues 1-29 and 43-180; these read MSNF…QQGF and SWIK…KPLG. The span at 66–95 shows a compositional bias: basic and acidic residues; it reads NSHDALDRKLIERDEPKATISRYRSEDMLD. An N6-acetyllysine modification is found at Lys-82. Positions 97-110 are enriched in polar residues; it reads TLSSFRTPQSTKTP. A compositionally biased stretch (low complexity) spans 111–130; that stretch reads AVSSFNANTTATASTPATTP. Positions 161-170 are enriched in pro residues; sequence LHPPLPPKPC. A run of 15 repeats spans residues 207 to 226, 227 to 241, 242 to 261, 262 to 281, 282 to 301, 302 to 320, 321 to 340, 341 to 360, 361 to 380, 381 to 398, 399 to 418, 419 to 438, 439 to 458, 459 to 477, and 478 to 496. The 15 X approximate tandem repeats stretch occupies residues 207–496; the sequence is TEDLDDIIRV…VNSHVAEKNG (290 aa). At Ser-264 the chain carries Phosphoserine. Position 343 is a phosphoserine (Ser-343). The tract at residues 353 to 385 is disordered; that stretch reads EVNRSNKGGPSLDNFTKGVPARSRANQRDQDLD. Residues 436 to 455 are disordered; the sequence is NQRNHDVDSTIRGNPTGTRC. The span at 446-455 shows a compositional bias: polar residues; the sequence is IRGNPTGTRC. The 67-residue stretch at 583-649 folds into the LIM zinc-binding domain; sequence DMCTYCRKPL…EPCYSKVMAK (67 aa).

Expressed in the upper layers of stratified epithelia, including, ependyma and choroid plexus of the brain ventricles.

The protein resides in the cytoplasm. Its subcellular location is the membrane. Functionally, may function in the assembly or regulation of proteins in the cornified envelope. The LIM domain may be involved in homotypic or heterotypic associations and may function to localize sciellin to the cornified envelope. The chain is Sciellin (Scel) from Mus musculus (Mouse).